The sequence spans 506 residues: Serine/threonine-protein kinase D6PKL1 (506 aa).

Residues 1–96 (MASKYGSGVL…TCSSFSGNNK (96 aa)) form a disordered region. Positions 12–23 (ENKKEKGDKETP) are enriched in basic and acidic residues. A compositionally biased stretch (polar residues) spans 24–54 (ETSYSSQSVSVNTLADQVSSTLSFAPSSDSK). A compositionally biased stretch (basic and acidic residues) spans 55-67 (TGGEVKFNEKSDQ). Over residues 77-92 (STSSDISDESTCSSFS) the composition is skewed to low complexity. The region spanning 123–456 (FRLLKRLGCG…ATEMKQHPFF (334 aa)) is the Protein kinase domain. ATP is bound by residues 129 to 137 (LGCGDIGTV) and Lys152. Asp248 serves as the catalytic Proton acceptor. Residues 475–495 (PVDYESAPATPAAATSTSVKS) form a disordered region. Low complexity predominate over residues 480 to 492 (SAPATPAAATSTS).

Belongs to the protein kinase superfamily. AGC Ser/Thr protein kinase family.

Its subcellular location is the cell membrane. It carries out the reaction L-seryl-[protein] + ATP = O-phospho-L-seryl-[protein] + ADP + H(+). The catalysed reaction is L-threonyl-[protein] + ATP = O-phospho-L-threonyl-[protein] + ADP + H(+). Protein kinase that regulates the auxin transport activity of PIN auxin efflux facilitators by direct phosphorylation. D6PK-mediated PIN phosphorylation promotes auxin transport in the hypocotyl and this is a prerequisite for PHOT1-dependent hypocotyl bending. The sequence is that of Serine/threonine-protein kinase D6PKL1 (D6PKL1) from Arabidopsis thaliana (Mouse-ear cress).